Consider the following 263-residue polypeptide: Undecaprenyl-diphosphatase (263 aa).

8 helical membrane-spanning segments follow: residues 1–21 (MSYLHAIILGIVEGITEFLPI), 41–61 (FTKAFEVIIQFGAIMSVLVLY), 69–89 (WGFYRKLFVAFLPTAIIGFVV), 96–116 (LMGSVQVVAWSLIIGGVILIW), 147–167 (AIAMIPGVSRSGATIMGGLTL), 177–197 (FSFFLAVPTMAAATLYKLLKI), 208–228 (LLLVGCAVAFVVAMIAIKFFI), and 238–258 (GFGYYRIVLGLVILILLYTGH).

This sequence belongs to the UppP family.

It localises to the cell inner membrane. The catalysed reaction is di-trans,octa-cis-undecaprenyl diphosphate + H2O = di-trans,octa-cis-undecaprenyl phosphate + phosphate + H(+). In terms of biological role, catalyzes the dephosphorylation of undecaprenyl diphosphate (UPP). Confers resistance to bacitracin. This chain is Undecaprenyl-diphosphatase, found in Bdellovibrio bacteriovorus (strain ATCC 15356 / DSM 50701 / NCIMB 9529 / HD100).